Here is an 89-residue protein sequence, read N- to C-terminus: Cell division protein FtsB (89 aa).

The Cytoplasmic segment spans residues 1 to 3 (MRP). Residues 4–21 (IIAILIALFILLQYQLWF) traverse the membrane as a helical segment. Topologically, residues 22–89 (AAGGIVSVHH…KNEVFYQIVK (68 aa)) are periplasmic. Positions 29-62 (VHHLNENINHQIMENQKLKDRNTALLADIDDLKH) form a coiled coil.

Belongs to the FtsB family. In terms of assembly, part of a complex composed of FtsB, FtsL and FtsQ.

The protein resides in the cell inner membrane. Functionally, essential cell division protein. May link together the upstream cell division proteins, which are predominantly cytoplasmic, with the downstream cell division proteins, which are predominantly periplasmic. The chain is Cell division protein FtsB from Coxiella burnetii (strain RSA 493 / Nine Mile phase I).